The following is a 113-amino-acid chain: Large ribosomal subunit protein uL18 (113 aa).

Belongs to the universal ribosomal protein uL18 family. In terms of assembly, part of the 50S ribosomal subunit; part of the 5S rRNA/L5/L18/L25 subcomplex. Contacts the 5S and 23S rRNAs.

Functionally, this is one of the proteins that bind and probably mediate the attachment of the 5S RNA into the large ribosomal subunit, where it forms part of the central protuberance. In Phocaeicola vulgatus (strain ATCC 8482 / DSM 1447 / JCM 5826 / CCUG 4940 / NBRC 14291 / NCTC 11154) (Bacteroides vulgatus), this protein is Large ribosomal subunit protein uL18.